The sequence spans 473 residues: UTP--glucose-1-phosphate uridylyltransferase (473 aa).

Residues 89 to 92, Lys-103, Gln-166, and Gly-195 each bind UTP; that span reads LNGG. Residue 91-92 coordinates substrate; sequence GG. Substrate-binding positions include His-196 and 224–226; that span reads NSD. 2 residues coordinate UTP: Asp-226 and Lys-364.

This sequence belongs to the UDPGP type 1 family.

The protein resides in the cytoplasm. The catalysed reaction is alpha-D-glucose 1-phosphate + UTP + H(+) = UDP-alpha-D-glucose + diphosphate. Its function is as follows. Plays a central role as a glucosyl donor in cellular metabolic pathways. This Hordeum vulgare (Barley) protein is UTP--glucose-1-phosphate uridylyltransferase.